The primary structure comprises 80 residues: Putative membrane protein insertion efficiency factor (80 aa).

Residues 61 to 80 (KTGKDPIPDHFSLKRNQEGE) are disordered. The span at 62–80 (TGKDPIPDHFSLKRNQEGE) shows a compositional bias: basic and acidic residues.

Belongs to the UPF0161 family.

The protein resides in the cell membrane. Its function is as follows. Could be involved in insertion of integral membrane proteins into the membrane. In Streptococcus pneumoniae (strain CGSP14), this protein is Putative membrane protein insertion efficiency factor.